Reading from the N-terminus, the 126-residue chain is Interleukin-18-binding protein (126 aa).

The first 20 residues, 1–20 (MRILFLIAFMYGCVHPYVNA), serve as a signal peptide directing secretion.

The protein belongs to the orthopoxvirus OPG022 family.

The protein localises to the secreted. Functionally, soluble IL18-binding protein that may modulate the host antiviral response. This is Interleukin-18-binding protein (OPG022) from Bos taurus (Bovine).